The following is a 120-amino-acid chain: Ribonuclease P protein component (120 aa).

It belongs to the RnpA family. In terms of assembly, consists of a catalytic RNA component (M1 or rnpB) and a protein subunit.

It catalyses the reaction Endonucleolytic cleavage of RNA, removing 5'-extranucleotides from tRNA precursor.. RNaseP catalyzes the removal of the 5'-leader sequence from pre-tRNA to produce the mature 5'-terminus. It can also cleave other RNA substrates such as 4.5S RNA. The protein component plays an auxiliary but essential role in vivo by binding to the 5'-leader sequence and broadening the substrate specificity of the ribozyme. The chain is Ribonuclease P protein component from Pseudoalteromonas atlantica (strain T6c / ATCC BAA-1087).